Reading from the N-terminus, the 123-residue chain is Signal recognition particle 14 kDa protein (123 aa).

A disordered region spans residues 99 to 123; it reads KKKPTPTTTPSSSTTAKTAAKKTKV. Residues 103 to 116 show a composition bias toward low complexity; sequence TPTTTPSSSTTAKT.

It belongs to the SRP14 family. In terms of assembly, heterodimer with srp9; binds RNA as heterodimer. Component of a signal recognition particle (SRP) complex that consists of a 7SL RNA molecule and six protein subunits: srp72, srp68, srp54, srp19, srp14 and srp9.

It localises to the cytoplasm. Component of the signal recognition particle (SRP) complex, a ribonucleoprotein complex that mediates the cotranslational targeting of secretory and membrane proteins to the endoplasmic reticulum (ER). Srp9 together with srp14 and the Alu portion of the SRP RNA, constitutes the elongation arrest domain of SRP. The complex of srp9 and srp14 is required for SRP RNA binding. This Dictyostelium discoideum (Social amoeba) protein is Signal recognition particle 14 kDa protein (srp14-1).